Here is a 50-residue protein sequence, read N- to C-terminus: U-megalopygitoxin(9)-Mo13 (50 aa).

An N-terminal signal peptide occupies residues 1–23; it reads MKLVFLFFIVAVMVSLFVGMTEA. A disulfide bridge connects residues cysteine 33 and cysteine 40.

It belongs to the caterpillar 9 family. Expressed by the venom apparatus.

The protein localises to the secreted. Functionally, probable toxin. The polypeptide is U-megalopygitoxin(9)-Mo13 (Megalopyge opercularis (Southern flannel moth)).